The primary structure comprises 673 residues: Forkhead box protein O3 (673 aa).

Residues 1–153 form a disordered region; that stretch reads MAEAPASPAP…SGQPRKCSSR (153 aa). A Phosphoserine; by AMPK modification is found at serine 30. Threonine 32 is subject to Phosphothreonine; by PKB/AKT1. An N6-methyllysine modification is found at lysine 46. Positions 57–68 are enriched in acidic residues; that stretch reads IPEEEDDEDDED. The span at 79-89 shows a compositional bias: gly residues; that stretch reads IGGGGGSGTLG. The segment at 80–108 is required for mitochondrial import; that stretch reads GGGGGSGTLGSGLLLEDSARVLAPGGQDP. The residue at position 149 (lysine 149) is an N6-methyllysine. The segment at residues 157–251 is a DNA-binding region (fork-head); sequence WGNLSYADLI…KSGKAPRRRA (95 aa). Threonine 179 carries the phosphothreonine; by AMPK modification. Position 209 is a phosphoserine; by STK4/MST1 (serine 209). A Phosphoserine; by MAPKAPK5 modification is found at serine 215. An N6-methyllysine modification is found at lysine 230. The interval 231 to 302 is disordered; that stretch reads SSWWIINPDG…GSPTSRSSDE (72 aa). Position 242 is an N6-acetyllysine (lysine 242). The Nuclear localization signal signature appears at 242 to 259; sequence KSGKAPRRRAVSMDNSNK. Serine 253 carries the phosphoserine; by PKB/AKT1 and MAPKAPK5 modification. A compositionally biased stretch (basic residues) spans 261–272; sequence TKSRGRAAKKKA. N6-methyllysine is present on residues lysine 262 and lysine 271. Residues serine 280 and serine 284 each carry the phosphoserine modification. Positions 283 to 298 are enriched in polar residues; that stretch reads DSPSQLSKWPGSPTSR. Lysine 290 is subject to N6-methyllysine. At serine 294 the chain carries Phosphoserine. Serine 299 is subject to Phosphoserine; by CaMK2A. The interval 300 to 673 is mediates interaction with CHUK/IKKA and IKBKB/IKKB; that stretch reads SDELDAWTDF…QASSQSWVPG (374 aa). Phosphoserine is present on serine 311. Residue serine 315 is modified to Phosphoserine; by SGK1. Serine 399 and serine 413 each carry phosphoserine; by AMPK. The residue at position 419 (lysine 419) is an N6-methyllysine. At serine 421 the chain carries Phosphoserine. Residues 536-587 are disordered; it reads HQHQTQGALGGSRALSNSVSNMGLSESSSLGSAKHQQQSPVSQSMQTLSDSL. The segment covering 549–582 has biased composition (polar residues); sequence ALSNSVSNMGLSESSSLGSAKHQQQSPVSQSMQT. Serine 551 carries the post-translational modification Phosphoserine; by MAPKAPK5. A Phosphoserine; by AMPK and MAPKAPK5 modification is found at serine 555. 2 positions are modified to phosphoserine; by AMPK: serine 588 and serine 626. A Phosphoserine; by IKKB modification is found at serine 644.

Upon metabolic stress, forms a complex composed of FOXO3, SIRT3 and mitochondrial RNA polymerase POLRMT; the complex is recruited to mtDNA in a SIRT3-dependent manner. Also forms a complex composed of FOXO3, SIRT3, TFAM and POLRMT. Interacts with SIRT2; the interaction occurs independently of SIRT2 deacetylase activity. Interacts with YWHAB/14-3-3-beta and YWHAZ/14-3-3-zeta, which are required for cytosolic sequestration. Upon oxidative stress, interacts with STK4/MST1, which disrupts interaction with YWHAB/14-3-3-beta and leads to nuclear translocation. Interacts with PIM1. Interacts with DDIT3/CHOP. Interacts (deacetylated form) with SKP2. Interacts with CHUK and IKBKB. Interacts with CAMK2A, CAMK2B and calcineurin A. Interacts with NUPR1; this interaction represses FOXO3 transactivation. In the presence of survival factors such as IGF1, phosphorylated on Thr-32 and Ser-253 by AKT1/PKB. This phosphorylated form then interacts with 14-3-3 proteins and is retained in the cytoplasm. Survival factor withdrawal induces dephosphorylation and promotes translocation to the nucleus where the dephosphorylated protein induces transcription of target genes and triggers apoptosis. Although AKT1/PKB doesn't appear to phosphorylate Ser-315 directly, it may activate other kinases that trigger phosphorylation at this residue. Phosphorylated by STK4/MST1 on Ser-209 upon oxidative stress, which leads to dissociation from YWHAB/14-3-3-beta and nuclear translocation. Phosphorylated by PIM1. Phosphorylation by AMPK leads to the activation of transcriptional activity without affecting subcellular localization. In response to metabolic stress, phosphorylated by AMPK on Ser-30 which mediates FOXO3 mitochondrial translocation. Phosphorylation by MAPKAPK5 promotes nuclear localization and DNA-binding, leading to induction of miR-34b and miR-34c expression, 2 post-transcriptional regulators of MYC that bind to the 3'UTR of MYC transcript and prevent its translation. Phosphorylated by CHUK/IKKA and IKBKB/IKKB. TNF-induced inactivation of FOXO3 requires its phosphorylation at Ser-644 by IKBKB/IKKB which promotes FOXO3 retention in the cytoplasm, polyubiquitination and ubiquitin-mediated proteasomal degradation. May be dephosphorylated by calcineurin A on Ser-299 which abolishes FOXO3 transcriptional activity. In cancer cells, ERK mediated-phosphorylation of Ser-12 is required for mitochondrial translocation of FOXO3 in response to metabolic stress or chemotherapeutic agents. Phosphorylation at Ser-253 promotes its degradation by the proteasome. Dephosphorylation at Ser-253 by protein phosphatase 2A (PPP2CA) promotes its stabilization; interaction with PPP2CA is enhanced by AMBRA1. Post-translationally, deacetylation by SIRT1 or SIRT2 stimulates interaction of FOXO3 with SKP2 and facilitates SCF(SKP2)-mediated FOXO3 ubiquitination and proteasomal degradation. Deacetylation by SIRT2 stimulates FOXO3-mediated transcriptional activity in response to oxidative stress. Deacetylated by SIRT3. Deacetylation by SIRT3 stimulates FOXO3-mediated mtDNA transcriptional activity in response to metabolic stress. In terms of processing, heavily methylated by SET9 which decreases stability, while moderately increasing transcriptional activity. The main methylation site is Lys-271. Methylation doesn't affect subcellular location. Polyubiquitinated. Ubiquitinated by a SCF complex containing SKP2, leading to proteasomal degradation. Post-translationally, the N-terminus is cleaved following import into the mitochondrion. Ubiquitous.

The protein localises to the cytoplasm. It localises to the cytosol. Its subcellular location is the nucleus. The protein resides in the mitochondrion matrix. It is found in the mitochondrion outer membrane. Transcriptional activator that recognizes and binds to the DNA sequence 5'-[AG]TAAA[TC]A-3' and regulates different processes, such as apoptosis and autophagy. Acts as a positive regulator of autophagy in skeletal muscle: in starved cells, enters the nucleus following dephosphorylation and binds the promoters of autophagy genes, such as GABARAP1L, MAP1LC3B and ATG12, thereby activating their expression, resulting in proteolysis of skeletal muscle proteins. Triggers apoptosis in the absence of survival factors, including neuronal cell death upon oxidative stress. Participates in post-transcriptional regulation of MYC: following phosphorylation by MAPKAPK5, promotes induction of miR-34b and miR-34c expression, 2 post-transcriptional regulators of MYC that bind to the 3'UTR of MYC transcript and prevent its translation. In response to metabolic stress, translocates into the mitochondria where it promotes mtDNA transcription. In response to metabolic stress, translocates into the mitochondria where it promotes mtDNA transcription. Also acts as a key regulator of chondrogenic commitment of skeletal progenitor cells in response to lipid availability: when lipids levels are low, translocates to the nucleus and promotes expression of SOX9, which induces chondrogenic commitment and suppresses fatty acid oxidation. Also acts as a key regulator of regulatory T-cells (Treg) differentiation by activating expression of FOXP3. The polypeptide is Forkhead box protein O3 (Homo sapiens (Human)).